The chain runs to 872 residues: DNA mismatch repair protein MutS (872 aa).

Residue 632 to 639 (GPNMGGKS) coordinates ATP.

Belongs to the DNA mismatch repair MutS family.

In terms of biological role, this protein is involved in the repair of mismatches in DNA. It is possible that it carries out the mismatch recognition step. This protein has a weak ATPase activity. The protein is DNA mismatch repair protein MutS of Colwellia psychrerythraea (strain 34H / ATCC BAA-681) (Vibrio psychroerythus).